A 1576-amino-acid polypeptide reads, in one-letter code: ABC transporter ALT5 (1576 aa).

Transmembrane regions (helical) follow at residues 27-47 (LKFE…ILAV), 72-92 (ILGF…TQGT), 99-119 (GLFL…VIVC), 267-287 (LPLS…PILP), 289-309 (LVLI…TGFL), 321-341 (GLIG…SLYW), 387-407 (VLAG…AVIV), 417-437 (GFFA…ATVG), 500-520 (ITAM…TLAA), and 525-545 (VATS…APLG). Residues 289-556 (LVLIGLSISQ…LFQSVAPLMS (268 aa)) enclose the ABC transmembrane type-1 1 domain. The ABC transporter 1 domain occupies 602–834 (FRVVNGSFRW…NGGYLQSLCV (233 aa)). 636–643 (GPVGSGKS) contributes to the ATP binding site. The next 7 helical transmembrane spans lie at 915–935 (VVAL…FAFP), 957–977 (FWVG…FLTM), 981–1001 (VTSI…AAIM), 1035–1054 (LIQF…VLAA), 1060–1078 (AAMY…KLYL), 1142–1162 (WLLF…VTLV), and 1171–1191 (GFAG…ASAM). The ABC transmembrane type-1 2 domain maps to 919-1199 (VAFLASAICY…AMQSYAKLET (281 aa)). In terms of domain architecture, ABC transporter 2 spans 1236 to 1567 (IKLDGVSASY…SHSKFRALCE (332 aa)). An ATP-binding site is contributed by 1278–1285 (GRSGSGKS).

It belongs to the ABC transporter superfamily. ABCC family. Conjugate transporter (TC 3.A.1.208) subfamily.

It localises to the cell membrane. Functionally, ABC transporter that may provide the dual role AAL-toxin export and self-protection by allowing the fungus to evade the harmful effect of its own AAL-toxin production. The chain is ABC transporter ALT5 from Alternaria alternata (Alternaria rot fungus).